Reading from the N-terminus, the 206-residue chain is Inner membrane-spanning protein YciB (206 aa).

Helical transmembrane passes span 22–42, 50–70, 76–96, 118–138, and 148–168; these read IYTA…LTYF, MQVI…FLHD, WKVT…HIMG, INWA…YVAF, and FKVF…GVYI. Over residues 178 to 189 the composition is skewed to basic and acidic residues; it reads LPKDKHQQRDQE. The interval 178–206 is disordered; that stretch reads LPKDKHQQRDQETQNDTQQELSGKNTEEK. The segment covering 191-206 has biased composition (polar residues); sequence QNDTQQELSGKNTEEK.

The protein belongs to the YciB family.

It localises to the cell inner membrane. In terms of biological role, plays a role in cell envelope biogenesis, maintenance of cell envelope integrity and membrane homeostasis. In Vibrio atlanticus (strain LGP32) (Vibrio splendidus (strain Mel32)), this protein is Inner membrane-spanning protein YciB.